The chain runs to 133 residues: Snaclec botrocetin subunit alpha (133 aa).

3 disulfide bridges follow: C2/C13, C30/C128, and C103/C120. Positions 9-129 (YEGNCYKFFQ…CAQKNPFVCK (121 aa)) constitute a C-type lectin domain.

Belongs to the snaclec family. Heterodimer of subunits alpha and beta; disulfide-linked. Botrocetin and vWF form a soluble complex. Expressed by the venom gland.

It localises to the secreted. Snaclec that binds to von Willebrand factor (VWF) and induces its interaction with GPIbalpha (GP1BA) (via the vWF A1 domain), resulting in platelet aggregation. This chain is Snaclec botrocetin subunit alpha, found in Bothrops jararaca (Jararaca).